The primary structure comprises 412 residues: CCA-adding enzyme (412 aa).

Ser41 and Lys44 together coordinate ATP. CTP is bound by residues Ser41 and Lys44. Mg(2+) is bound by residues Asp53, Asp55, and Asp106. Residues His129, Lys149, and Tyr158 each contribute to the ATP site. Positions 129, 149, and 158 each coordinate CTP.

This sequence belongs to the tRNA nucleotidyltransferase/poly(A) polymerase family. Archaeal CCA-adding enzyme subfamily. Homodimer. It depends on Mg(2+) as a cofactor.

The catalysed reaction is a tRNA precursor + 2 CTP + ATP = a tRNA with a 3' CCA end + 3 diphosphate. It catalyses the reaction a tRNA with a 3' CCA end + 2 CTP + ATP = a tRNA with a 3' CCACCA end + 3 diphosphate. Its function is as follows. Catalyzes the addition and repair of the essential 3'-terminal CCA sequence in tRNAs without using a nucleic acid template. Adds these three nucleotides in the order of C, C, and A to the tRNA nucleotide-73, using CTP and ATP as substrates and producing inorganic pyrophosphate. tRNA 3'-terminal CCA addition is required both for tRNA processing and repair. Also involved in tRNA surveillance by mediating tandem CCA addition to generate a CCACCA at the 3' terminus of unstable tRNAs. While stable tRNAs receive only 3'-terminal CCA, unstable tRNAs are marked with CCACCA and rapidly degraded. The polypeptide is CCA-adding enzyme (Saccharolobus islandicus (strain M.16.27) (Sulfolobus islandicus)).